Here is a 767-residue protein sequence, read N- to C-terminus: 5-methyltetrahydropteroyltriglutamate--homocysteine methyltransferase (767 aa).

5-methyltetrahydropteroyltri-L-glutamate-binding positions include 17–20 and K117; that span reads RELK. Residues 442–444 and E495 each bind L-homocysteine; that span reads IGS. Residues 442 to 444 and E495 contribute to the L-methionine site; that span reads IGS. Residues 526–527 and W572 contribute to the 5-methyltetrahydropteroyltri-L-glutamate site; that span reads RC. D610 contributes to the L-homocysteine binding site. Position 610 (D610) interacts with L-methionine. 5-methyltetrahydropteroyltri-L-glutamate is bound at residue E616. The Zn(2+) site is built by H653, C655, and E677. Catalysis depends on H706, which acts as the Proton donor. C738 serves as a coordination point for Zn(2+).

This sequence belongs to the vitamin-B12 independent methionine synthase family. Zn(2+) serves as cofactor.

The enzyme catalyses 5-methyltetrahydropteroyltri-L-glutamate + L-homocysteine = tetrahydropteroyltri-L-glutamate + L-methionine. The protein operates within amino-acid biosynthesis; L-methionine biosynthesis via de novo pathway; L-methionine from L-homocysteine (MetE route): step 1/1. Catalyzes the transfer of a methyl group from 5-methyltetrahydrofolate to homocysteine resulting in methionine formation. The chain is 5-methyltetrahydropteroyltriglutamate--homocysteine methyltransferase from Bifidobacterium animalis subsp. lactis (strain AD011).